The chain runs to 418 residues: Gamma-glutamyl phosphate reductase (418 aa).

This sequence belongs to the gamma-glutamyl phosphate reductase family.

The protein localises to the cytoplasm. The enzyme catalyses L-glutamate 5-semialdehyde + phosphate + NADP(+) = L-glutamyl 5-phosphate + NADPH + H(+). It functions in the pathway amino-acid biosynthesis; L-proline biosynthesis; L-glutamate 5-semialdehyde from L-glutamate: step 2/2. Catalyzes the NADPH-dependent reduction of L-glutamate 5-phosphate into L-glutamate 5-semialdehyde and phosphate. The product spontaneously undergoes cyclization to form 1-pyrroline-5-carboxylate. The sequence is that of Gamma-glutamyl phosphate reductase from Thermobifida fusca (strain YX).